Reading from the N-terminus, the 211-residue chain is MLAHLRRVGLSLNRQIRSHIAFNSNDRMSSTCGLDTDIVWMDLEMTGLDIEKDKILEVACIITDQDLNVKSEGPCFAINHPQEVYDSMNEWCMKHHYNSGLIDRCKSSDVNLEEASNLVLSYLEKNIPKRACPLGGNSVYTDRLFIMKFMPLVDAYLHYRIVDVSTIKELAKRWHPAILDSAPKKSFTHRSLDDIRESIKELAYYKANLFK.

Residues I38–L202 form the Exonuclease domain. Residue Y159 is part of the active site.

It belongs to the oligoribonuclease family.

In terms of biological role, 3'-to-5' exoribonuclease specific for small oligoribonucleotides. The polypeptide is Probable oligoribonuclease (Drosophila melanogaster (Fruit fly)).